Consider the following 314-residue polypeptide: Beta-lactamase (314 aa).

Positions 1-39 (MHPSTSRPSRRTLLTATAGAALAAATLVPGTAHASSGGR) form a signal peptide, tat-type signal. The interval 31–50 (TAHASSGGRGHGSGSVSDAE) is disordered. Residue S89 is the Acyl-ester intermediate of the active site. Position 259–261 (259–261 (KTG)) interacts with substrate.

Belongs to the class-A beta-lactamase family. Post-translationally, predicted to be exported by the Tat system. The position of the signal peptide cleavage has been experimentally proven.

The enzyme catalyses a beta-lactam + H2O = a substituted beta-amino acid. This Streptomyces albus G protein is Beta-lactamase.